A 164-amino-acid polypeptide reads, in one-letter code: Ribonuclease H (164 aa).

Residues 9-150 (DMPRVTIYTD…ADTLANAATD (142 aa)) enclose the RNase H type-1 domain. Residues aspartate 18, glutamate 56, aspartate 78, and aspartate 142 each coordinate Mg(2+).

It belongs to the RNase H family. In terms of assembly, monomer. Mg(2+) is required as a cofactor.

It localises to the cytoplasm. The catalysed reaction is Endonucleolytic cleavage to 5'-phosphomonoester.. Its function is as follows. Endonuclease that specifically degrades the RNA of RNA-DNA hybrids. The polypeptide is Ribonuclease H (Chromohalobacter salexigens (strain ATCC BAA-138 / DSM 3043 / CIP 106854 / NCIMB 13768 / 1H11)).